The chain runs to 132 residues: ATP synthase epsilon chain (132 aa).

It belongs to the ATPase epsilon chain family. In terms of assembly, F-type ATPases have 2 components, CF(1) - the catalytic core - and CF(0) - the membrane proton channel. CF(1) has five subunits: alpha(3), beta(3), gamma(1), delta(1), epsilon(1). CF(0) has three main subunits: a, b and c.

It localises to the cell membrane. In terms of biological role, produces ATP from ADP in the presence of a proton gradient across the membrane. The polypeptide is ATP synthase epsilon chain (Clostridium kluyveri (strain NBRC 12016)).